The chain runs to 308 residues: tRNA pseudouridine synthase B (308 aa).

Catalysis depends on Asp33, which acts as the Nucleophile.

The protein belongs to the pseudouridine synthase TruB family. Type 1 subfamily.

It carries out the reaction uridine(55) in tRNA = pseudouridine(55) in tRNA. Its function is as follows. Responsible for synthesis of pseudouridine from uracil-55 in the psi GC loop of transfer RNAs. The protein is tRNA pseudouridine synthase B of Nitrosomonas europaea (strain ATCC 19718 / CIP 103999 / KCTC 2705 / NBRC 14298).